A 325-amino-acid polypeptide reads, in one-letter code: Delta(1)-pyrroline-2-carboxylate reductase (325 aa).

The protein belongs to the ornithine cyclodeaminase/mu-crystallin family.

It carries out the reaction L-proline + NAD(+) = 1-pyrroline-2-carboxylate + NADH + H(+). The catalysed reaction is L-proline + NADP(+) = 1-pyrroline-2-carboxylate + NADPH + H(+). Functionally, catalyzes the reduction of Delta(1)-pyrroline-2-carboxylate (Pyr2C) to L-proline, using preferentially NADPH over NADH as the electron donor. Is likely involved in a degradation pathway that converts trans-3-hydroxy-L-proline (t3LHyp) to L-proline. This is Delta(1)-pyrroline-2-carboxylate reductase from Bacillus thuringiensis subsp. konkukian (strain 97-27).